The chain runs to 192 residues: UPF0312 protein PputGB1_5030 (192 aa).

A signal peptide spans 1 to 23 (MLKKTFAALALGTALLSAGQAMA).

The protein belongs to the UPF0312 family. Type 1 subfamily.

It localises to the periplasm. The polypeptide is UPF0312 protein PputGB1_5030 (Pseudomonas putida (strain GB-1)).